The primary structure comprises 282 residues: Ribosomal RNA small subunit methyltransferase A (282 aa).

Residues 1-21 form a disordered region; it reads MPDFPKEHATPMSNRPPAHQA. S-adenosyl-L-methionine contacts are provided by N28, L30, G55, E76, D101, and N126.

It belongs to the class I-like SAM-binding methyltransferase superfamily. rRNA adenine N(6)-methyltransferase family. RsmA subfamily.

It is found in the cytoplasm. The catalysed reaction is adenosine(1518)/adenosine(1519) in 16S rRNA + 4 S-adenosyl-L-methionine = N(6)-dimethyladenosine(1518)/N(6)-dimethyladenosine(1519) in 16S rRNA + 4 S-adenosyl-L-homocysteine + 4 H(+). Functionally, specifically dimethylates two adjacent adenosines (A1518 and A1519) in the loop of a conserved hairpin near the 3'-end of 16S rRNA in the 30S particle. May play a critical role in biogenesis of 30S subunits. In Chromohalobacter salexigens (strain ATCC BAA-138 / DSM 3043 / CIP 106854 / NCIMB 13768 / 1H11), this protein is Ribosomal RNA small subunit methyltransferase A.